The chain runs to 394 residues: Elongation factor Tu 2 (394 aa).

One can recognise a tr-type G domain in the interval 10-204; that stretch reads KPHVNVGTIG…ALDSYIPQPE (195 aa). The segment at 19 to 26 is G1; it reads GHVDHGKT. Residue 19–26 coordinates GTP; it reads GHVDHGKT. Thr26 lines the Mg(2+) pocket. The tract at residues 60-64 is G2; sequence GITIN. Residues 81 to 84 form a G3 region; the sequence is DCPG. GTP is bound by residues 81–85 and 136–139; these read DCPGH and NKCD. The segment at 136-139 is G4; the sequence is NKCD. The G5 stretch occupies residues 174-176; that stretch reads SAL.

It belongs to the TRAFAC class translation factor GTPase superfamily. Classic translation factor GTPase family. EF-Tu/EF-1A subfamily. As to quaternary structure, monomer.

The protein resides in the cytoplasm. The enzyme catalyses GTP + H2O = GDP + phosphate + H(+). GTP hydrolase that promotes the GTP-dependent binding of aminoacyl-tRNA to the A-site of ribosomes during protein biosynthesis. The polypeptide is Elongation factor Tu 2 (Yersinia pestis bv. Antiqua (strain Antiqua)).